A 238-amino-acid chain; its full sequence is Uridylate kinase (238 aa).

12-15 (KLSG) lines the ATP pocket. Residue glycine 54 participates in UMP binding. The ATP site is built by glycine 55 and arginine 59. UMP-binding positions include aspartate 74 and 135 to 142 (TGNPYFTT). Residues threonine 162, tyrosine 168, and aspartate 171 each contribute to the ATP site.

It belongs to the UMP kinase family. As to quaternary structure, homohexamer.

It is found in the cytoplasm. The enzyme catalyses UMP + ATP = UDP + ADP. It functions in the pathway pyrimidine metabolism; CTP biosynthesis via de novo pathway; UDP from UMP (UMPK route): step 1/1. Its activity is regulated as follows. Inhibited by UTP. Catalyzes the reversible phosphorylation of UMP to UDP. The sequence is that of Uridylate kinase from Oleidesulfovibrio alaskensis (strain ATCC BAA-1058 / DSM 17464 / G20) (Desulfovibrio alaskensis).